Here is a 431-residue protein sequence, read N- to C-terminus: 3-phosphoshikimate 1-carboxyvinyltransferase (431 aa).

3 residues coordinate 3-phosphoshikimate: Lys-26, Ser-27, and Arg-31. A phosphoenolpyruvate-binding site is contributed by Lys-26. Gly-99 and Arg-127 together coordinate phosphoenolpyruvate. 6 residues coordinate 3-phosphoshikimate: Ser-170, Ser-171, Gln-172, Ser-199, Glu-314, and His-343. Position 172 (Gln-172) interacts with phosphoenolpyruvate. Glu-314 acts as the Proton acceptor in catalysis. Arg-347, Arg-388, and Lys-413 together coordinate phosphoenolpyruvate.

This sequence belongs to the EPSP synthase family. As to quaternary structure, monomer.

The protein localises to the cytoplasm. It catalyses the reaction 3-phosphoshikimate + phosphoenolpyruvate = 5-O-(1-carboxyvinyl)-3-phosphoshikimate + phosphate. It functions in the pathway metabolic intermediate biosynthesis; chorismate biosynthesis; chorismate from D-erythrose 4-phosphate and phosphoenolpyruvate: step 6/7. Catalyzes the transfer of the enolpyruvyl moiety of phosphoenolpyruvate (PEP) to the 5-hydroxyl of shikimate-3-phosphate (S3P) to produce enolpyruvyl shikimate-3-phosphate and inorganic phosphate. In Mycobacterium marinum (strain ATCC BAA-535 / M), this protein is 3-phosphoshikimate 1-carboxyvinyltransferase.